The primary structure comprises 538 residues: Frizzled-4 (538 aa).

A signal peptide spans 1 to 37 (MAWQGTGPSVRGMPGGVRLRLGLLLLQLLLLQRPALG). The Extracellular portion of the chain corresponds to 38–213 (FGDEEERRCD…KCGYDAGLYS (176 aa)). The FZ domain maps to 41-162 (EEERRCDPIR…NDHNHMCMEG (122 aa)). Intrachain disulfides connect cysteine 46–cysteine 107, cysteine 54–cysteine 100, cysteine 91–cysteine 129, cysteine 118–cysteine 159, cysteine 122–cysteine 146, cysteine 182–cysteine 201, cysteine 205–cysteine 283, and cysteine 303–cysteine 378. Asparagine 60 carries an N-linked (GlcNAc...) asparagine glycan. Residue asparagine 145 is glycosylated (N-linked (GlcNAc...) asparagine). The helical transmembrane segment at 214-244 (RSAKEFTDIWMAVWASLCFISTTFTVLTFLI) threads the bilayer. Residues 245 to 250 (DSSRFS) lie on the Cytoplasmic side of the membrane. A helical transmembrane segment spans residues 251 to 276 (YPERPIIFLSMCYNIYSIAYIVRLTV). The Extracellular segment spans residues 277 to 300 (GRERISCDFEEAAEPVLIQEGLKN). Residues 301 to 334 (TGCAIIFLLMYFFGMASSIWWVILTLTWFLAAGL) form a helical membrane-spanning segment. At 335 to 337 (KWG) the chain is on the cytoplasmic side. The helical transmembrane segment at 338-366 (HEAIEMHSSYFHIAAWAIPAVKTIVILIM) threads the bilayer. Residues 367 to 384 (RLVDADELTGLCYVGNQS) lie on the Extracellular side of the membrane. N-linked (GlcNAc...) asparagine glycosylation occurs at asparagine 382. Residues 385–419 (LDALTGFVVAPLFTYLVIGTLFIAAGLVALFKIRS) form a helical membrane-spanning segment. Residues 420-432 (NLQKDGTKTDKLE) are Cytoplasmic-facing. A helical membrane pass occupies residues 433–461 (RLMVKIGVFSVLYTVPATCVIACYFYEIS). Residues 462–474 (NWALFRYSADDSN) lie on the Extracellular side of the membrane. The helical transmembrane segment at 475-496 (MAVEMLKIFMSLLVGITSGMWI) threads the bilayer. Over 497 to 538 (WSAKTLHTWQKCSNRLVNSGKVKREKRGNGWVKPGKGNETVV) the chain is Cytoplasmic. A Lys-Thr-X-X-X-Trp motif, mediates interaction with the PDZ domain of Dvl family members motif is present at residues 500-505 (KTLHTW). The PDZ-binding motif lies at 536–538 (TVV).

Belongs to the G-protein coupled receptor Fz/Smo family. As to quaternary structure, interacts with MAGI3 and NDP. Component of a complex, at least composed of TSPAN12, FZD4 and norrin (NDP). Interacts (via FZ domain) with TSKU; TSKU competes with WNT2B for binding to FZD4, inhibiting Wnt signaling and repressing peripheral eye development. Interacts with glypican GPC3. Ubiquitinated by ZNRF3, leading to its degradation by the proteasome.

The protein resides in the cell membrane. Its function is as follows. Receptor for Wnt proteins. Most of frizzled receptors are coupled to the beta-catenin (CTNNB1) canonical signaling pathway, which leads to the activation of disheveled proteins, inhibition of GSK-3 kinase, nuclear accumulation of beta-catenin (CTNNB1) and activation of Wnt target genes. Plays a critical role in retinal vascularization by acting as a receptor for Wnt proteins and norrin (NDP). In retina, it can be both activated by Wnt protein-binding, but also by a Wnt-independent signaling via binding of norrin (NDP), promoting in both cases beta-catenin (CTNNB1) accumulation and stimulation of LEF/TCF-mediated transcriptional programs. A second signaling pathway involving PKC and calcium fluxes has been seen for some family members, but it is not yet clear if it represents a distinct pathway or if it can be integrated in the canonical pathway, as PKC seems to be required for Wnt-mediated inactivation of GSK-3 kinase. Both pathways seem to involve interactions with G-proteins. May be involved in transduction and intercellular transmission of polarity information during tissue morphogenesis and/or in differentiated tissues. This chain is Frizzled-4 (Fzd4), found in Rattus norvegicus (Rat).